Consider the following 421-residue polypeptide: MLKEEDKIFTNLHGQQSHDLKSSKKRGDWENTKALLDKGRDFIVEEVKKSGLRGRGGAGFSTGMKWSFMPKNLEKSCYLVVNADESEPGTCKDRDILRFEPHKLIEGCLLASFAIGANNCYIYIRGEFYNEASNIQRALDEAYKEGLIGKNSCGSGFDCNIYLHRGAGAYICGEETALLESLEGKKGMPRLKPPFPAGFGLYGCPTTINNVESIAVVPTILRRGASWFAGIGKPNNTGTKIFCISGHVNKPCNVEEAMGISLKELIEKYAGGVRGGWDNLKAIIPGGSSVPLLPKSLCEVDMDFDSLRTAGSGLGTGGIIVMDQSTDIIYAIARLSKFYMHESCGQCTPCREGTGWMWRVMMRLVKGNVTKSEIDELLNVTKAIEGHTICALGDAAAWPIQGLIRHFRSEIEARIKSYSVV.

An NAD(+)-binding site is contributed by 54–63; the sequence is GRGGAGFSTG. 166–213 serves as a coordination point for FMN; that stretch reads GAGAYICGEETALLESLEGKKGMPRLKPPFPAGFGLYGCPTTINNVES. 4 residues coordinate [4Fe-4S] cluster: Cys-344, Cys-347, Cys-350, and Cys-390.

It belongs to the complex I 51 kDa subunit family. FMN is required as a cofactor. [4Fe-4S] cluster serves as cofactor.

It catalyses the reaction a quinone + NADH + 5 H(+)(in) = a quinol + NAD(+) + 4 H(+)(out). In terms of biological role, NDH-1 shuttles electrons from NADH, via FMN and iron-sulfur (Fe-S) centers, to quinones in the respiratory chain. Couples the redox reaction to proton translocation (for every two electrons transferred, four hydrogen ions are translocated across the cytoplasmic membrane), and thus conserves the redox energy in a proton gradient. This Rickettsia rickettsii (strain Sheila Smith) protein is NADH-quinone oxidoreductase subunit F (nuoF).